Here is a 346-residue protein sequence, read N- to C-terminus: Low specificity L-threonine aldolase (346 aa).

Position 207 is an N6-(pyridoxal phosphate)lysine (Lys-207).

The protein belongs to the threonine aldolase family. As to quaternary structure, homotetramer. It depends on pyridoxal 5'-phosphate as a cofactor.

It catalyses the reaction L-threonine = acetaldehyde + glycine. The enzyme catalyses L-allo-threonine = acetaldehyde + glycine. Functionally, catalyzes the cleavage of L-allo-threonine and L-threonine to glycine and acetaldehyde. Can also act on L-erythro-phenylserine, L-threo-phenylserine, L-beta-3,4-methylenedioxyphenylserine and L-beta-3,4-dihydroxyphenylserine. This chain is Low specificity L-threonine aldolase (ltaE), found in Pseudomonas sp. (strain NCIMB 10558).